The chain runs to 88 residues: Cell division topological specificity factor (88 aa).

The protein belongs to the MinE family.

Its function is as follows. Prevents the cell division inhibition by proteins MinC and MinD at internal division sites while permitting inhibition at polar sites. This ensures cell division at the proper site by restricting the formation of a division septum at the midpoint of the long axis of the cell. The polypeptide is Cell division topological specificity factor (Aromatoleum aromaticum (strain DSM 19018 / LMG 30748 / EbN1) (Azoarcus sp. (strain EbN1))).